The primary structure comprises 258 residues: Glycerol-3-phosphate acyltransferase (258 aa).

The next 6 helical transmembrane spans lie at 11–31 (IILASVIGYFLGSISWSIIIV), 62–82 (LVVAFLDALKVVFTAIVAILL), 94–114 (SYFIPCIFALIGHCYPIYYKF), 124–144 (LGLLFVVNVLYLIIFLIIWFI), 160–180 (ALIILLIMWIPYLSGVSYFIW), and 212–232 (WASGILEGNIIILIGGLILAW).

It belongs to the PlsY family. Probably interacts with PlsX.

Its subcellular location is the cell membrane. The enzyme catalyses an acyl phosphate + sn-glycerol 3-phosphate = a 1-acyl-sn-glycero-3-phosphate + phosphate. It participates in lipid metabolism; phospholipid metabolism. Its function is as follows. Catalyzes the transfer of an acyl group from acyl-phosphate (acyl-PO(4)) to glycerol-3-phosphate (G3P) to form lysophosphatidic acid (LPA). This enzyme utilizes acyl-phosphate as fatty acyl donor, but not acyl-CoA or acyl-ACP. The polypeptide is Glycerol-3-phosphate acyltransferase (Mycoplasma mycoides subsp. mycoides SC (strain CCUG 32753 / NCTC 10114 / PG1)).